The primary structure comprises 384 residues: MSWQEKINAALDARRAADALRRRYPVAQGAGRWLVADDRQYLNFSSNDYLGLSHHPQIIRAWQQGAEQFGVGSGGSGHVSGYSVAHQALEEELAEWLGYSRALLFISGFAANQAVIAAMMAKEDRIVADRLSHASLLEAASLSPSQLRRFAHNDVTHLARLLASPCPGQQLVVTEGVFSMDGDSAPLAEIQQVTQQHNGWLMVDDAHGTGVIGEQGRGSCWLQKVKPELLVVTFGKGFGVSGAAVLCSSTVADYLLQFARHLIYSTSMPPAQAQALRASLAVIRRDEGDARREKLVSLIARFRAGVQDLPFTLADSCSAIQPLIVGDNSRALQLAEKLRQQGCWVTAIRPPTVPAGTARLRLTLTAAHEMQDIDRLLEVLHGNG.

Arg21 contributes to the substrate binding site. Pyridoxal 5'-phosphate is bound at residue 108–109 (GF). Residue His133 coordinates substrate. Pyridoxal 5'-phosphate contacts are provided by Ser179, His207, and Thr233. An N6-(pyridoxal phosphate)lysine modification is found at Lys236. Position 352 (Thr352) interacts with substrate.

The protein belongs to the class-II pyridoxal-phosphate-dependent aminotransferase family. BioF subfamily. Homodimer. It depends on pyridoxal 5'-phosphate as a cofactor.

The enzyme catalyses 6-carboxyhexanoyl-[ACP] + L-alanine + H(+) = (8S)-8-amino-7-oxononanoate + holo-[ACP] + CO2. It participates in cofactor biosynthesis; biotin biosynthesis. Its function is as follows. Catalyzes the decarboxylative condensation of pimeloyl-[acyl-carrier protein] and L-alanine to produce 8-amino-7-oxononanoate (AON), [acyl-carrier protein], and carbon dioxide. This chain is 8-amino-7-oxononanoate synthase, found in Escherichia coli (strain SE11).